Consider the following 610-residue polypeptide: Phosphomethylpyrimidine synthase (610 aa).

Substrate is bound by residues Asn216, Met245, Tyr274, His310, Ser330–Gly332, Asp371–Arg374, and Glu410. His414 serves as a coordination point for Zn(2+). Residue Tyr437 coordinates substrate. Residue His478 coordinates Zn(2+). Residues Cys558, Cys561, and Cys566 each coordinate [4Fe-4S] cluster.

This sequence belongs to the ThiC family. Homodimer. [4Fe-4S] cluster is required as a cofactor.

It carries out the reaction 5-amino-1-(5-phospho-beta-D-ribosyl)imidazole + S-adenosyl-L-methionine = 4-amino-2-methyl-5-(phosphooxymethyl)pyrimidine + CO + 5'-deoxyadenosine + formate + L-methionine + 3 H(+). The protein operates within cofactor biosynthesis; thiamine diphosphate biosynthesis. Its function is as follows. Catalyzes the synthesis of the hydroxymethylpyrimidine phosphate (HMP-P) moiety of thiamine from aminoimidazole ribotide (AIR) in a radical S-adenosyl-L-methionine (SAM)-dependent reaction. This Allorhizobium ampelinum (strain ATCC BAA-846 / DSM 112012 / S4) (Agrobacterium vitis (strain S4)) protein is Phosphomethylpyrimidine synthase.